A 340-amino-acid chain; its full sequence is Quinic acid degradation cluster protein x (340 aa).

Residues E90, D115, L117, D118, and D262 each coordinate Mg(2+). A substrate-binding site is contributed by E90. Substrate is bound by residues 117–120 (LDGT) and D262.

Belongs to the inositol monophosphatase superfamily.

Functionally, part of the qa gene cluster that mediates the catabolism of quinic acid (QA) and as such, allows the use of QA as a sole carbon source. Its function within the pathway has not been determined yet but it probably plays a regulatory role. The qa cluster encodes 3 inducible enymes (qa-2, qa-3 and qa-4) catalyzing the first three reactions in the catabolism of quinic acid to protocatechuic acid (also known as 3,4-Dihydroxybenzoic acid). The chain is Quinic acid degradation cluster protein x from Neurospora crassa (strain ATCC 24698 / 74-OR23-1A / CBS 708.71 / DSM 1257 / FGSC 987).